The primary structure comprises 525 residues: Cytochrome P450 monooxygenase tpcC (525 aa).

The chain crosses the membrane as a helical span at residues 13-33 (LPVTLVSLLVGSIFYFCYLTV). A heme-binding site is contributed by Cys-457.

It belongs to the cytochrome P450 family. Heme serves as cofactor.

The protein resides in the membrane. The protein operates within secondary metabolite biosynthesis; terpenoid biosynthesis. Its function is as follows. Cytochrome P450 monooxygenase; part of the gene cluster that mediates the biosynthesis of terpestacin. The bifunctional terpene synthase tpcA converts isopentenyl diphosphate (IPP) and dimethylallyl diphosphate (DMAPP) into the sesterterpene preterpestacin I. The C-terminal prenyltransferase (PT) domain of tpcA catalyzes formation of GFPP, whereas the N-terminal terpene cyclase (TC) domain catalyzes the cyclization of GFPP into preterpestacin I. The cytochrome P450 monooxygenase tpcB then hydroxylates preterpestacin I to yield 24-hydroxypreterpstacin I (renamed as preterpestacin II) whereas the cytochrome P450 monooxygenase tpcC further hydroxylates preterpestacin II to yield 16,17-dihydroxypreterpestacin II (renamed as preterpestacin III). Finally, the FAD-dependent monooxygenase tpcD converts preterpestacin III into terpestacin. This chain is Cytochrome P450 monooxygenase tpcC, found in Cochliobolus heterostrophus (strain C5 / ATCC 48332 / race O) (Southern corn leaf blight fungus).